The chain runs to 187 residues: Large ribosomal subunit protein uL5 (187 aa).

Belongs to the universal ribosomal protein uL5 family. In terms of assembly, part of the 50S ribosomal subunit; part of the 5S rRNA/L5/L18/L25 subcomplex. Contacts the 5S rRNA and the P site tRNA. Forms a bridge to the 30S subunit in the 70S ribosome.

This is one of the proteins that bind and probably mediate the attachment of the 5S RNA into the large ribosomal subunit, where it forms part of the central protuberance. In the 70S ribosome it contacts protein S13 of the 30S subunit (bridge B1b), connecting the 2 subunits; this bridge is implicated in subunit movement. Contacts the P site tRNA; the 5S rRNA and some of its associated proteins might help stabilize positioning of ribosome-bound tRNAs. The chain is Large ribosomal subunit protein uL5 from Mycolicibacterium paratuberculosis (strain ATCC BAA-968 / K-10) (Mycobacterium paratuberculosis).